Reading from the N-terminus, the 149-residue chain is Putative pre-16S rRNA nuclease (149 aa).

This sequence belongs to the YqgF nuclease family.

The protein resides in the cytoplasm. Its function is as follows. Could be a nuclease involved in processing of the 5'-end of pre-16S rRNA. This is Putative pre-16S rRNA nuclease from Cupriavidus metallidurans (strain ATCC 43123 / DSM 2839 / NBRC 102507 / CH34) (Ralstonia metallidurans).